The primary structure comprises 95 residues: Aspartyl/glutamyl-tRNA(Asn/Gln) amidotransferase subunit C (95 aa).

It belongs to the GatC family. Heterotrimer of A, B and C subunits.

The catalysed reaction is L-glutamyl-tRNA(Gln) + L-glutamine + ATP + H2O = L-glutaminyl-tRNA(Gln) + L-glutamate + ADP + phosphate + H(+). It carries out the reaction L-aspartyl-tRNA(Asn) + L-glutamine + ATP + H2O = L-asparaginyl-tRNA(Asn) + L-glutamate + ADP + phosphate + 2 H(+). Functionally, allows the formation of correctly charged Asn-tRNA(Asn) or Gln-tRNA(Gln) through the transamidation of misacylated Asp-tRNA(Asn) or Glu-tRNA(Gln) in organisms which lack either or both of asparaginyl-tRNA or glutaminyl-tRNA synthetases. The reaction takes place in the presence of glutamine and ATP through an activated phospho-Asp-tRNA(Asn) or phospho-Glu-tRNA(Gln). This is Aspartyl/glutamyl-tRNA(Asn/Gln) amidotransferase subunit C from Bartonella bacilliformis (strain ATCC 35685 / KC583 / Herrer 020/F12,63).